Reading from the N-terminus, the 612-residue chain is Coagulation factor X-activating enzyme heavy chain (612 aa).

The signal sequence occupies residues methionine 1–serine 20. Positions isoleucine 21–serine 193 are cleaved as a propeptide — or 194. The Peptidase M12B domain occupies threonine 201–proline 395. Glutamate 204 is a Ca(2+) binding site. An N-linked (GlcNAc...) asparagine glycan is attached at asparagine 259. Aspartate 286 is a binding site for Ca(2+). Disulfide bonds link cysteine 310–cysteine 390, cysteine 350–cysteine 374, and cysteine 352–cysteine 357. Histidine 335 contacts Zn(2+). Glutamate 336 is a catalytic residue. 2 residues coordinate Zn(2+): histidine 339 and histidine 345. N-linked (GlcNAc...) asparagine glycans are attached at residues asparagine 353 and asparagine 373. 7 residues coordinate Ca(2+): cysteine 390, asparagine 393, isoleucine 405, asparagine 408, glutamate 412, glutamate 415, and aspartate 418. The Disintegrin domain occupies proline 403 to asparagine 489. Cysteine 461 and cysteine 481 are oxidised to a cystine. Residues glutamate 467 to aspartate 469 carry the D/ECD-tripeptide motif.

It belongs to the venom metalloproteinase (M12B) family. P-III subfamily. P-IIId sub-subfamily. In terms of assembly, heterotrimer; disulfide-linked. The heterotrimer consists of 1 heavy chain and 2 light chains (lectins): LC1 and LC2 (AC Q7T045 and AC Q696W1). The cofactor is Zn(2+). Post-translationally, N-glycosylated. Contains 8.0% of hexoses, 2.5% of hexosamines and 2.5% of sialic acids. As to expression, expressed by the venom gland.

Its subcellular location is the secreted. It catalyses the reaction Specifically activates several components of the blood clotting system, including coagulation factor X, coagulation factor IX and protein C by cleavage of Arg-|-Xaa bonds. Has no action on insulin B chain.. Calcium is required for the activity of the heterotrimer. In terms of biological role, catalytic subunit of blood coagulation factor X-activating enzyme. Activates coagulation factor X (F10) by cleaving the Arg(234)-Ile(235) bond, activates coagulation factor IX (F9) by cleaving the Arg(226)-Val(227) bond and is also able to activate protein C (PROC). In Macrovipera lebetinus (Levantine viper), this protein is Coagulation factor X-activating enzyme heavy chain.